The chain runs to 331 residues: Glyceraldehyde-3-phosphate dehydrogenase 2 (331 aa).

NAD(+)-binding positions include 11–12 (RI), Asp33, and Arg78. D-glyceraldehyde 3-phosphate is bound by residues 148-150 (SCT), Thr179, 208-209 (TG), and Arg231. The active-site Nucleophile is Cys149. Residue Asn313 participates in NAD(+) binding.

The protein belongs to the glyceraldehyde-3-phosphate dehydrogenase family. In terms of assembly, homotetramer.

It is found in the cytoplasm. It catalyses the reaction D-glyceraldehyde 3-phosphate + phosphate + NAD(+) = (2R)-3-phospho-glyceroyl phosphate + NADH + H(+). It functions in the pathway carbohydrate degradation; glycolysis; pyruvate from D-glyceraldehyde 3-phosphate: step 1/5. This Kluyveromyces marxianus (Yeast) protein is Glyceraldehyde-3-phosphate dehydrogenase 2 (GAP2).